A 497-amino-acid polypeptide reads, in one-letter code: Kynureninase (497 aa).

Residues 59–86 (GRLPAYPPNHAKPGETATAQNGTSNTND) are disordered. Residues 75–86 (ATAQNGTSNTND) show a composition bias toward polar residues. Residues Leu166, Thr167, 194–197 (FPSD), Asp278, His281, and Tyr303 each bind pyridoxal 5'-phosphate. Lys304 carries the post-translational modification N6-(pyridoxal phosphate)lysine. Residues Trp337 and Asn365 each coordinate pyridoxal 5'-phosphate.

This sequence belongs to the kynureninase family. As to quaternary structure, homodimer. The cofactor is pyridoxal 5'-phosphate.

It is found in the cytoplasm. It carries out the reaction L-kynurenine + H2O = anthranilate + L-alanine + H(+). The enzyme catalyses 3-hydroxy-L-kynurenine + H2O = 3-hydroxyanthranilate + L-alanine + H(+). The protein operates within amino-acid degradation; L-kynurenine degradation; L-alanine and anthranilate from L-kynurenine: step 1/1. Its pathway is cofactor biosynthesis; NAD(+) biosynthesis; quinolinate from L-kynurenine: step 2/3. Its function is as follows. Catalyzes the cleavage of L-kynurenine (L-Kyn) and L-3-hydroxykynurenine (L-3OHKyn) into anthranilic acid (AA) and 3-hydroxyanthranilic acid (3-OHAA), respectively. The protein is Kynureninase of Pyricularia oryzae (strain 70-15 / ATCC MYA-4617 / FGSC 8958) (Rice blast fungus).